The chain runs to 378 residues: MKCAHFDQQQCLSCRHIKQSMSVQVAAKSQVLSQLLSDFEVEQWHEPVFGPDSGFRNKAKMVVLGAAHQPILGIVTPTGEPVSLCDCNLYPEDMQLLLHRLEQFVRQAGIPPYNVDKAKGELKFILLTRSQIKGEYLLRFVLKSHKSIERIERELPKLLSEYPQIKVVSVNIQPVHMAILEGEEEIFLTEETRLSEQFNDVPLFIRPKSFFQTHPQIAAKLYQTAREWVAELKPSSLWDLFCGVGGFGLHCASKTIPLTGIEISSEAIACAKISAETMGLTQVDFTALDSTGFAQGCDATDKPDVVIVNPPRRGIGESLCQSLSDFAPKAILYSSCNPHTLAKDLANIQGYHIQKVQLFDMFPHTDHFEVLVMLVKPS.

[4Fe-4S] cluster is bound by residues cysteine 3, cysteine 11, cysteine 14, and cysteine 87. 4 residues coordinate S-adenosyl-L-methionine: glutamine 212, phenylalanine 241, glutamate 262, and asparagine 309. Cysteine 336 (nucleophile) is an active-site residue.

It belongs to the class I-like SAM-binding methyltransferase superfamily. RNA M5U methyltransferase family. RlmC subfamily.

The enzyme catalyses uridine(747) in 23S rRNA + S-adenosyl-L-methionine = 5-methyluridine(747) in 23S rRNA + S-adenosyl-L-homocysteine + H(+). Its function is as follows. Catalyzes the formation of 5-methyl-uridine at position 747 (m5U747) in 23S rRNA. The polypeptide is 23S rRNA (uracil(747)-C(5))-methyltransferase RlmC (Shewanella pealeana (strain ATCC 700345 / ANG-SQ1)).